Reading from the N-terminus, the 246-residue chain is Mast cell protease-like protein (246 aa).

An N-terminal signal peptide occupies residues 1 to 18; sequence MQALLFLMALLLPSGAGA. Positions 19–20 are cleaved as a propeptide — activation peptide; sequence EE. Residues 21-244 enclose the Peptidase S1 domain; sequence IIGGVESEPH…HVPWINRVIK (224 aa). Residues cysteine 50 and cysteine 66 are joined by a disulfide bond. Catalysis depends on charge relay system residues histidine 65 and aspartate 109. 2 disulfides stabilise this stretch: cysteine 143/cysteine 208 and cysteine 174/cysteine 187. Serine 202 functions as the Charge relay system in the catalytic mechanism.

Belongs to the peptidase S1 family. Granzyme subfamily.

This chain is Mast cell protease-like protein (Mcptl), found in Mus musculus (Mouse).